Reading from the N-terminus, the 279-residue chain is Nitrate import permease protein NrtB (279 aa).

5 helical membrane-spanning segments follow: residues 25-45 (FLPYVVCLPIFLAIWQVISAI), 91-111 (VAIGYLLAACTGILVGGVLGM), 149-169 (AIFVIFITAIWPIIINTAVGI), 200-220 (VPYVFAGLRIAVGLAWLAIVA), and 249-269 (IILAIFYVGLVGLSLDRLVAW). The 184-residue stretch at 84–267 (ILISLQRVAI…LVGLSLDRLV (184 aa)) folds into the ABC transmembrane type-1 domain.

This sequence belongs to the binding-protein-dependent transport system permease family. CysTW subfamily. As to quaternary structure, the complex is composed of two ATP-binding proteins (NrtC and NrtD), two transmembrane proteins (NrtB) and a solute-binding protein (NrtA).

The protein localises to the cell inner membrane. Part of the ABC transporter complex NrtABCD involved in nitrate uptake. The complex is probably also involved in nitrite transport. Probably responsible for the translocation of the substrate across the membrane. The protein is Nitrate import permease protein NrtB of Synechococcus elongatus (strain ATCC 33912 / PCC 7942 / FACHB-805) (Anacystis nidulans R2).